Here is a 198-residue protein sequence, read N- to C-terminus: Cyclin-dependent kinase inhibitor 1B (198 aa).

The segment covering 1–12 (MSNVRVSNGSPT) has biased composition (polar residues). The disordered stretch occupies residues 1–30 (MSNVRVSNGSPTSERRDAKQAEYPKPSACR). At Ser10 the chain carries Phosphoserine; by UHMK1. The segment covering 13 to 22 (SERRDAKQAE) has biased composition (basic and acidic residues). The segment at 51 to 91 (DMEEASQNKWNFDFQNHKPLEGKYEWQEVEKGSLPEFYYRP) is interaction with CDK2. Tyr74 is modified (phosphotyrosine; by SRC). A disordered region spans residues 87-198 (FYYRPPRPPK…KKPGLRRRQT (112 aa)). Tyr88 bears the Phosphotyrosine; by ABL, LYN and SRC mark. Tyr89 is modified (phosphotyrosine). A compositionally biased stretch (polar residues) spans 104–113 (QESQDVSGTR). Residues 126-137 (EDTHLVDQKTDA) show a composition bias toward basic and acidic residues. The short motif at 153–169 (KRPATDDSSPQNKRANR) is the Nuclear localization signal element. At Thr157 the chain carries Phosphothreonine; by CaMK1, PKB/AKT1 and PIM1. Position 170 is a phosphothreonine (Thr170). The span at 175–186 (SDGSPNAGSVEQ) shows a compositional bias: polar residues. Position 187 is a phosphothreonine; by PKB/AKT1, CDK1 and CDK2 (Thr187). Thr198 carries the post-translational modification Phosphothreonine; by CaMK1, PKB/AKT1, RPS6KA1, RPS6KA3 and PIM1.

The protein belongs to the CDI family. In terms of assembly, forms a ternary complex composed of CCNE1, CDK2 and CDKN1B. Interacts directly with CCNE1; the interaction is inhibited by CDK2-dependent phosphorylation on Thr-187. Interacts with COPS5, subunit of the COP9 signalosome complex; the interaction leads to CDKN1B degradation. Interacts with NUP50; the interaction leads to nuclear import and degradation of phosphorylated CDKN1B. Interacts with CCND1 and SNX6. Interacts (Thr-198-phosphorylated form) with 14-3-3 proteins, binds strongly YWHAQ, weakly YWHAE and YWHAH, but not YWHAB nor YWHAZ; the interaction with YWHAQ results in translocation to the cytoplasm. Interacts with AKT1 and LYN; the interactions lead to cytoplasmic mislocation, phosphorylation of CDKN1B and inhibition of cell cycle arrest. Forms a ternary complex with CCNA2 and CDK2; CDKN1B inhibits the kinase activity of CDK2 through conformational rearrangements. Interacts (unphosphorylated form) with CDK2. Forms a complex with CDK2 and SPDYA, but does not directly interact with SPDYA. Forms a ternary complex composed of cyclin D, CDK4 and CDKN1B. Interacts (phosphorylated on Tyr-88 and Tyr-89) with CDK4; the interaction is required for cyclin D and CDK4 complex assembly, induces nuclear translocation and activates the CDK4 kinase activity. Interacts with GRB2. Interacts with PIM1. Identified in a complex with SKP1, SKP2 and CKS1B. Interacts with UHMK1; the interaction leads to cytoplasmic mislocation, phosphorylation of CDKN1B and inhibition of cell cycle arrest. Also interacts with CDK1. Dephosphorylated on Thr-187 by PPM1H, leading to CDKN1B stability. Post-translationally, phosphorylated; phosphorylation occurs on serine, threonine and tyrosine residues. Phosphorylation on Ser-10 is the major site of phosphorylation in resting cells, takes place at the G(0)-G(1) phase and leads to protein stability. Phosphorylation on other sites is greatly enhanced by mitogens, growth factors, cMYC and in certain cancer cell lines. The phosphorylated form found in the cytoplasm is inactivate. Phosphorylation on Thr-198 is required for interaction with 14-3-3 proteins. Phosphorylation on Thr-187, by CDK1 and CDK2 leads to protein ubiquitination and proteasomal degradation. Tyrosine phosphorylation promotes this process. Phosphorylation by PKB/AKT1 can be suppressed by LY294002, an inhibitor of the catalytic subunit of PI3K. Phosphorylation on Tyr-88 and Tyr-89 has no effect on binding CDK2, but is required for binding CDK4. Dephosphorylated on tyrosine residues by G-CSF. Dephosphorylated on Thr-187 by PPM1H, leading to CDKN1B stability. In terms of processing, ubiquitinated; in the cytoplasm by the KPC complex (composed of RNF123/KPC1 and UBAC1/KPC2) and, in the nucleus, by SCF(SKP2). The latter requires prior phosphorylation on Thr-187. Ubiquitinated; by a TRIM21-containing SCF(SKP2)-like complex; leads to its degradation. Subject to degradation in the lysosome. Interaction with SNX6 promotes lysosomal degradation.

The protein localises to the nucleus. It is found in the cytoplasm. The protein resides in the endosome. In terms of biological role, important regulator of cell cycle progression. Inhibits the kinase activity of CDK2 bound to cyclin A, but has little inhibitory activity on CDK2 bound to SPDYA. Involved in G1 arrest. Potent inhibitor of cyclin E- and cyclin A-CDK2 complexes. Forms a complex with cyclin type D-CDK4 complexes and is involved in the assembly, stability, and modulation of CCND1-CDK4 complex activation. Acts either as an inhibitor or an activator of cyclin type D-CDK4 complexes depending on its phosphorylation state and/or stoichometry. This is Cyclin-dependent kinase inhibitor 1B (CDKN1B) from Canis lupus familiaris (Dog).